The chain runs to 267 residues: Strigolactone esterase RMS3 (267 aa).

S96 serves as the catalytic Nucleophile. Catalysis depends on residues D218 and H247.

Belongs to the AB hydrolase superfamily.

Its subcellular location is the cytoplasm. It localises to the nucleus. Its function is as follows. Involved in strigolactone signaling pathway. Functions downstream of strigolactone synthesis, as a component of hormone signaling and as an enzyme that participates in the conversion of strigolactones to the bioactive form. Binds and hydrolyzes the synthetic strigolactone analog GR24 and its enantiomers in vitro. Forms a stable covalent complex with the D-ring of strigolactone, which is essential for hormone bioactivity. The D-ring is attached to His-247 of the catalytic triad. The hydrolysis of strigolactone into a covalently linked intermediate molecule is required to trigger strigolactone signaling. This mechanism defines RMS3 as a non-canonical hormone receptor with dual functions to generate and sense the active form of strigolactone. Strigolactones are hormones that inhibit tillering and shoot branching through the MAX-dependent pathway, contribute to the regulation of shoot architectural response to phosphate-limiting conditions and function as rhizosphere signal that stimulates hyphal branching of arbuscular mycorrhizal fungi and trigger seed germination of root parasitic weeds. In Pisum sativum (Garden pea), this protein is Strigolactone esterase RMS3.